Here is a 326-residue protein sequence, read N- to C-terminus: Balbiani ring protein 1 (326 aa).

The span at 1 to 33 shows a compositional bias: low complexity; it reads PSKSGPRPSKSGPRPSKSGPRPSKSGPRPSKSG. A disordered region spans residues 1–119; that stretch reads PSKSGPRPSK…RESPVCDDAM (119 aa). The span at 34–51 shows a compositional bias: basic and acidic residues; sequence PRPEKCGSAMRKAEAEKC. The segment covering 93–102 has biased composition (low complexity); the sequence is VTPTPEVPTT. Residues 107-119 are compositionally biased toward basic and acidic residues; that stretch reads SESRESPVCDDAM.

Salivary gland.

Its subcellular location is the secreted. In terms of biological role, used by the larvae to construct a supramolecular structure, the larval tube. The sequence is that of Balbiani ring protein 1 (BR1) from Chironomus pallidivittatus (Midge).